A 366-amino-acid chain; its full sequence is 5-hydroxytryptamine receptor 1F (366 aa).

Residues 1-24 are Extracellular-facing; the sequence is MDFLNSSDQNLTSEELLNRMPSKI. N-linked (GlcNAc...) asparagine glycosylation is found at asparagine 5 and asparagine 10. A helical membrane pass occupies residues 25–49; sequence LVSLTLSGLALMTTTINCLVITAII. Residues 50–59 lie on the Cytoplasmic side of the membrane; the sequence is VTRKLHHPAN. Residues 60-81 form a helical membrane-spanning segment; that stretch reads YLICSLAVTDFLVAVLVMPFSI. Residues 82–96 lie on the Extracellular side of the membrane; that stretch reads VYIVRESWIMGQGLC. Cysteine 96 and cysteine 172 are disulfide-bonded. The helical transmembrane segment at 97–119 threads the bilayer; sequence DLWLSVDIICCTCSILHLSAIAL. Positions 103 and 107 each coordinate serotonin. Positions 120-122 match the DRY motif; important for ligand-induced conformation changes motif; that stretch reads DRY. The Cytoplasmic segment spans residues 120–139; sequence DRYRAITDAVEYARKRTPRH. A helical membrane pass occupies residues 140-159; that stretch reads AGITITTVWVISVFISVPPL. Residues 160-178 are Extracellular-facing; the sequence is FWRHQGNSRDDQCIIKHDH. Residues 179-202 traverse the membrane as a helical segment; that stretch reads IVSTIYSTFGAFYIPLVLILILYY. Residues 203–291 lie on the Cytoplasmic side of the membrane; it reads KIYRAARTLY…KISGTRERKA (89 aa). Residues 292–315 traverse the membrane as a helical segment; sequence ATTLGLILGAFVICWLPFFVKELV. Over 316 to 327 the chain is Extracellular; the sequence is VNICEKCKISEE. A helical transmembrane segment spans residues 328 to 350; it reads MSNFLAWLGYLNSLINPLIYTIF. The NPxxY motif; important for ligand-induced conformation changes and signaling motif lies at 343-347; it reads NPLIY. Residues 351–366 lie on the Cytoplasmic side of the membrane; the sequence is NEDFKKAFQKLVRCRN.

It belongs to the G-protein coupled receptor 1 family.

It is found in the cell membrane. In terms of biological role, G-protein coupled receptor for 5-hydroxytryptamine (serotonin). Also functions as a receptor for various alkaloids and psychoactive substances. Ligand binding causes a conformation change that triggers signaling via guanine nucleotide-binding proteins (G proteins) and modulates the activity of downstream effectors, such as adenylate cyclase. HTR1F is coupled to G(i)/G(o) G alpha proteins and mediates inhibitory neurotransmission by inhibiting adenylate cyclase activity. This chain is 5-hydroxytryptamine receptor 1F (Htr1f), found in Rattus norvegicus (Rat).